The primary structure comprises 831 residues: Cation/H(+) symporter 13 (831 aa).

12 helical membrane-spanning segments follow: residues 50–70, 89–109, 112–132, 147–167, 214–234, 250–270, 282–302, 303–323, 334–354, 364–384, 397–417, and 430–450; these read YALP…RLIF, VVLG…FLPA, KIII…LLGL, ILIG…TIMF, LATH…LAFN, MIIG…VWLT, VVPF…GEAM, GVHA…GPPL, FASN…TNFF, VVMI…GTAA, LCLA…TIVW, and LVII…VYLY.

It belongs to the monovalent cation:proton antiporter 2 (CPA2) transporter (TC 2.A.37) family. CHX (TC 2.A.37.4) subfamily. Preferentially expressed in pollen before and after germination. Detected in pollen grains within anthers of the flower buds or in pollen on fully open flowers and on the stigma, and in pollen tubes growing in the style. Weakly expressed in roots.

The protein localises to the cell membrane. High-affinity potassium transporter that plays a role in K(+) acquisition. May operate as a K(+)/H(+) symporter. In Arabidopsis thaliana (Mouse-ear cress), this protein is Cation/H(+) symporter 13 (CHX13).